Consider the following 382-residue polypeptide: Flap endonuclease 1-B (382 aa).

Residues 1–104 are N-domain; the sequence is MGIHGLAKLI…GELAKRSERR (104 aa). D34 contacts Mg(2+). 2 residues coordinate DNA: R47 and R70. Positions 86, 158, 160, 179, and 181 each coordinate Mg(2+). Positions 122–253 are I-domain; sequence NIEKFNKRLV…KRAIDLIRQH (132 aa). DNA is bound at residue E158. G231 and D233 together coordinate DNA. Mg(2+) is bound at residue D233. Residues 336–344 are interaction with PCNA; that stretch reads TQGRLDDFF. The disordered stretch occupies residues 352–382; that stretch reads STKRKEVESKGSTKKKSKTGGTPAGKFKRGK.

Belongs to the XPG/RAD2 endonuclease family. FEN1 subfamily. As to quaternary structure, interacts with PCNA. Three molecules of fen1 bind to one PCNA trimer with each molecule binding to one PCNA monomer. PCNA stimulates the nuclease activity without altering cleavage specificity. Mg(2+) serves as cofactor. Phosphorylated. Phosphorylation upon DNA damage induces relocalization to the nuclear plasma.

The protein localises to the nucleus. Its subcellular location is the nucleolus. The protein resides in the nucleoplasm. It localises to the mitochondrion. In terms of biological role, structure-specific nuclease with 5'-flap endonuclease and 5'-3' exonuclease activities involved in DNA replication and repair. During DNA replication, cleaves the 5'-overhanging flap structure that is generated by displacement synthesis when DNA polymerase encounters the 5'-end of a downstream Okazaki fragment. It enters the flap from the 5'-end and then tracks to cleave the flap base, leaving a nick for ligation. Also involved in the long patch base excision repair (LP-BER) pathway, by cleaving within the apurinic/apyrimidinic (AP) site-terminated flap. Acts as a genome stabilization factor that prevents flaps from equilibrating into structures that lead to duplications and deletions. Also possesses 5'-3' exonuclease activity on nicked or gapped double-stranded DNA, and exhibits RNase H activity. Also involved in replication and repair of rDNA and in repairing mitochondrial DNA. The chain is Flap endonuclease 1-B (fen1-b) from Xenopus laevis (African clawed frog).